Reading from the N-terminus, the 411-residue chain is Secretion apparatus protein BsaZ (411 aa).

The next 4 helical transmembrane spans lie at 28–48 (IVAL…VDLT), 80–100 (IAAP…LVQS), 137–157 (ALLY…LYHA), and 175–195 (IVLT…VLIL). The tract at residues 341-411 (AANRGGPPPE…APARTGDQNA (71 aa)) is disordered. The span at 370–404 (DACADNAFPDDAPPGAAAPNAGSPDGPAPDGGAPA) shows a compositional bias: low complexity.

This sequence belongs to the type III secretion exporter family.

It is found in the cell membrane. Part of the bsa type III secretion system, is involved in the intracellular replication of invading bacteria inside the host cell. Probably necessary for the lysis of the vacuole membrane and escape into the host cell cytoplasm. The protein is Secretion apparatus protein BsaZ (bsaZ) of Burkholderia pseudomallei (strain K96243).